Consider the following 95-residue polypeptide: Large ribosomal subunit protein eL42 (95 aa).

Residues Cys-11, Cys-14, Cys-71, and Cys-74 each coordinate Zn(2+). A C4-type zinc finger spans residues 11-74 (CPRCNTHTEH…QVLVITCTVC (64 aa)).

Belongs to the eukaryotic ribosomal protein eL42 family. As to quaternary structure, part of the 50S ribosomal subunit. Zn(2+) serves as cofactor.

In terms of biological role, binds to the 23S rRNA. This Aeropyrum pernix (strain ATCC 700893 / DSM 11879 / JCM 9820 / NBRC 100138 / K1) protein is Large ribosomal subunit protein eL42.